Consider the following 429-residue polypeptide: Histidine--tRNA ligase (429 aa).

The protein belongs to the class-II aminoacyl-tRNA synthetase family. Homodimer.

It localises to the cytoplasm. The catalysed reaction is tRNA(His) + L-histidine + ATP = L-histidyl-tRNA(His) + AMP + diphosphate + H(+). The chain is Histidine--tRNA ligase from Prochlorococcus marinus (strain MIT 9515).